The primary structure comprises 637 residues: 1-deoxy-D-xylulose-5-phosphate synthase (637 aa).

Thiamine diphosphate is bound by residues His71 and 112–114 (SHA). Position 144 (Asp144) interacts with Mg(2+). Thiamine diphosphate is bound by residues 145-146 (GA), Asn173, Tyr284, and Glu365. Position 173 (Asn173) interacts with Mg(2+).

This sequence belongs to the transketolase family. DXPS subfamily. Homodimer. It depends on Mg(2+) as a cofactor. Thiamine diphosphate serves as cofactor.

The catalysed reaction is D-glyceraldehyde 3-phosphate + pyruvate + H(+) = 1-deoxy-D-xylulose 5-phosphate + CO2. It functions in the pathway metabolic intermediate biosynthesis; 1-deoxy-D-xylulose 5-phosphate biosynthesis; 1-deoxy-D-xylulose 5-phosphate from D-glyceraldehyde 3-phosphate and pyruvate: step 1/1. Functionally, catalyzes the acyloin condensation reaction between C atoms 2 and 3 of pyruvate and glyceraldehyde 3-phosphate to yield 1-deoxy-D-xylulose-5-phosphate (DXP). In Mycolicibacterium vanbaalenii (strain DSM 7251 / JCM 13017 / BCRC 16820 / KCTC 9966 / NRRL B-24157 / PYR-1) (Mycobacterium vanbaalenii), this protein is 1-deoxy-D-xylulose-5-phosphate synthase.